The primary structure comprises 1070 residues: 3',5'-cyclic-AMP phosphodiesterase (1070 aa).

4 disordered regions span residues Met-1 to Ser-91, Ser-166 to Gln-215, Val-487 to Gly-516, and Ser-615 to Thr-653. Over residues Lys-51–Val-69 the composition is skewed to low complexity. A compositionally biased stretch (polar residues) spans Ala-70–Gly-84. The span at Ser-166–Ser-210 shows a compositional bias: low complexity. Polar residues predominate over residues Pro-488–Gly-506. The 330-residue stretch at Val-656 to Ser-985 folds into the PDEase domain. His-732 functions as the Proton donor in the catalytic mechanism. His-732–His-736 lines the 3',5'-cyclic AMP pocket. His-736, His-772, Asp-773, and Asp-890 together coordinate a divalent metal cation. Residues Asp-773, Asp-890, and Gln-941 each contribute to the 3',5'-cyclic AMP site. Positions Glu-1007–Gly-1024 are enriched in acidic residues. Residues Glu-1007–Met-1070 form a disordered region. The span at Gly-1025–Ser-1042 shows a compositional bias: low complexity. The span at Gly-1043 to Met-1054 shows a compositional bias: gly residues. The segment covering Gly-1060 to Met-1070 has biased composition (polar residues).

The protein belongs to the cyclic nucleotide phosphodiesterase family. PDE4 subfamily. In terms of assembly, monomer. A divalent metal cation serves as cofactor.

It catalyses the reaction 3',5'-cyclic AMP + H2O = AMP + H(+). The protein operates within purine metabolism; 3',5'-cyclic AMP degradation; AMP from 3',5'-cyclic AMP: step 1/1. Hydrolyzes the second messenger cAMP, which is a key regulator of many important physiological processes. Vital for female fertility. Required for learning/memory. In Drosophila melanogaster (Fruit fly), this protein is 3',5'-cyclic-AMP phosphodiesterase (dnc).